The primary structure comprises 406 residues: MTYPNLLDRFLTYVKVNTRSDEHSTTTPSTQSQVDFATNVLIPEMKRVGLQNVYYLPNGFAIGTLPANDPSLTRKIGFISHMDTADFNAEGVNPQVIENYDGCVIELGNSGFKLDPADFKSLEKYPGQTLITTDGTTLLGADDKSGIAEIMTAIEYLTAHPEIKHCEIRVGFGPDEEIGVGANKFDAEDFDVDFAYTVDGGPLGELQYETFSAAGAELHFQGRNVHPGTAKGQMVNALQLAIDFHNQLPENDRPELTEGYQGFYHLMDVTGSVEEARASYIIRDFEKDAFEARKASMQSIADKMNEELGSNRVTLNLTDQYYNMKEVIEKDMTPITIAKAVMEDLGITPIIEPIRGGTDGSKISFMGIPTPNIFAGGENMHGRFEYVSLQTMERAVDTIIGIVRSL.

Histidine 81 lines the Zn(2+) pocket. Aspartate 83 is an active-site residue. A Zn(2+)-binding site is contributed by aspartate 142. The active-site Proton acceptor is glutamate 176. Zn(2+) contacts are provided by glutamate 177, aspartate 199, and histidine 381.

This sequence belongs to the peptidase M20B family. The cofactor is Zn(2+).

The protein localises to the cytoplasm. The enzyme catalyses Release of the N-terminal residue from a tripeptide.. Its function is as follows. Cleaves the N-terminal amino acid of tripeptides. The protein is Peptidase T of Streptococcus pneumoniae serotype 2 (strain D39 / NCTC 7466).